Reading from the N-terminus, the 1987-residue chain is Transcription factor 20 (1987 aa).

Residues 1-22 (MQSFREQSSYHGNQQSYPQEVH) show a composition bias toward polar residues. 5 disordered regions span residues 1–79 (MQSF…QGYQ), 96–432 (DTVA…GNVP), 446–481 (LSPT…DPGL), 502–816 (LLSD…GTAR), and 844–891 (PHWG…SLSE). Positions 51 to 74 (TGSSSSGRRGTAAAAAAMASETSG) are enriched in low complexity. The residue at position 59 (arginine 59) is an Omega-N-methylarginine. Positions 121–142 (QGSSFGNQYASEGHVSQFQAQH) are enriched in polar residues. Positions 163–205 (SAQYQQQASSQQQQQQQQQQQQQQQQQQQQVQQLRQQLYQSHQ) are enriched in low complexity. The span at 206–235 (PLPQTTGQPASGSSHLQPMQRPSTLPSSAG) shows a compositional bias: polar residues. Over residues 248 to 277 (QSSASSSSSSSFPSPQRFSQSGQSYDGSYS) the composition is skewed to low complexity. The span at 289-311 (VGSNAQAYGTQSNYSYQPQSMKN) shows a compositional bias: polar residues. A Glycyl lysine isopeptide (Lys-Gly) (interchain with G-Cter in SUMO2) cross-link involves residue lysine 316. A compositionally biased stretch (low complexity) spans 322 to 354 (QQGQQQQQQQPQPQQQQPQQQQQQQQQQQHPPQ). Residues 357–377 (MQYTNAATKMPLQSQVGQYNQ) are compositionally biased toward polar residues. Positions 396–416 (SNPSPAASVVQSPSCSSTPSP) are enriched in low complexity. A compositionally biased stretch (polar residues) spans 417 to 432 (LMQSGENLQCGQGNVP). Low complexity predominate over residues 446-456 (LSPTPSMMPSP). Phosphoserine occurs at positions 447 and 458. 3 stretches are compositionally biased toward polar residues: residues 526–537 (SCTNSEGSSQPE), 566–576 (LSGQSTSSDTT), and 585–605 (AGSS…TSPA). 4 positions are modified to phosphoserine: serine 567, serine 588, serine 603, and serine 612. Positions 618-627 (TSLSSEGNTK) are enriched in polar residues. Lysine 631 carries the N6-acetyllysine modification. The span at 645 to 657 (RVEKSGGQDKGSQ) shows a compositional bias: basic and acidic residues. The segment covering 666–682 (RPPSNSGVKEISHTSLP) has biased composition (polar residues). Serine 669 is modified (phosphoserine). Residues 693-715 (GNKNGDNNSSNHNGEGNGPSSHS) show a composition bias toward low complexity. Polar residues predominate over residues 722–731 (TGRTEPSKSP). Residues lysine 739, lysine 762, lysine 777, lysine 852, lysine 861, and lysine 873 each participate in a glycyl lysine isopeptide (Lys-Gly) (interchain with G-Cter in SUMO2) cross-link. Residues 761-777 (EKGDFGSHGERKGRNEK) show a composition bias toward basic and acidic residues. Residue serine 900 is modified to Phosphoserine. Residues lysine 949 and lysine 951 each participate in a glycyl lysine isopeptide (Lys-Gly) (interchain with G-Cter in SUMO2) cross-link. The disordered stretch occupies residues 949–1065 (KLKSQSGQIK…GDPHHMNPHM (117 aa)). Lysine 958 is covalently cross-linked (Glycyl lysine isopeptide (Lys-Gly) (interchain with G-Cter in SUMO1); alternate). A Glycyl lysine isopeptide (Lys-Gly) (interchain with G-Cter in SUMO2); alternate cross-link involves residue lysine 958. The span at 974–989 (KSGDHCHPTSIKHETY) shows a compositional bias: basic and acidic residues. Lysine 985 is covalently cross-linked (Glycyl lysine isopeptide (Lys-Gly) (interchain with G-Cter in SUMO2)). Serine 994 and serine 1033 each carry phosphoserine. Residue lysine 1043 forms a Glycyl lysine isopeptide (Lys-Gly) (interchain with G-Cter in SUMO2) linkage. Arginine 1052 is modified (omega-N-methylarginine). At serine 1081 the chain carries Phosphoserine. Glycyl lysine isopeptide (Lys-Gly) (interchain with G-Cter in SUMO2) cross-links involve residues lysine 1114, lysine 1126, lysine 1165, lysine 1201, lysine 1206, lysine 1211, lysine 1238, lysine 1259, lysine 1295, and lysine 1302. The segment at 1136–1372 (VIAAAQHRQE…SPAKTKILPP (237 aa)) is disordered. Residues 1158-1170 (DRVRSPLKNDKDG) show a composition bias toward basic and acidic residues. Residues 1198 to 1219 (LPAKSMELKHSSQKLQESCWDL) are leucine-zipper. The Nuclear localization signal signature appears at 1282-1295 (RRRVRSFISPIPSK). 2 stretches are compositionally biased toward basic and acidic residues: residues 1305–1321 (NADD…EGAD) and 1332–1346 (HSQD…DSSK). The residue at position 1333 (serine 1333) is a Phosphoserine. Lysine 1337 is covalently cross-linked (Glycyl lysine isopeptide (Lys-Gly) (interchain with G-Cter in SUMO2)). Serine 1363 carries the phosphoserine modification. Lysine 1366 is covalently cross-linked (Glycyl lysine isopeptide (Lys-Gly) (interchain with G-Cter in SUMO2)). A Phosphoserine modification is found at serine 1389. Positions 1415-1434 (SLKSGPPEGGTVATQEAEME) are disordered. Residues lysine 1417, lysine 1437, lysine 1456, and lysine 1474 each participate in a glycyl lysine isopeptide (Lys-Gly) (interchain with G-Cter in SUMO2) cross-link. The disordered stretch occupies residues 1446–1636 (SVTNQESNVE…KQAVPIVEPQ (191 aa)). The span at 1463–1479 (EEWRGSGDDKVKTEAHV) shows a compositional bias: basic and acidic residues. Residues 1481-1501 (TASTGKEPSGTMTSTASQKPG) show a composition bias toward polar residues. Lysine 1538 is covalently cross-linked (Glycyl lysine isopeptide (Lys-Gly) (interchain with G-Cter in SUMO2)). A Phosphoserine modification is found at serine 1550. Residue lysine 1552 forms a Glycyl lysine isopeptide (Lys-Gly) (interchain with G-Cter in SUMO2) linkage. Residues 1565 to 1579 (GKKKGRPIGSVNKQK) constitute a DNA-binding region (a.T hook). The span at 1584 to 1594 (QPPPPPQPPQM) shows a compositional bias: pro residues. The short motif at 1604 to 1628 (KPKKQRQRRERRKPGAQPRKRKTKQ) is the Nuclear localization signal element. Residues 1606-1627 (KKQRQRRERRKPGAQPRKRKTK) show a composition bias toward basic residues. A Glycyl lysine isopeptide (Lys-Gly) (interchain with G-Cter in SUMO2) cross-link involves residue lysine 1641. Disordered stretches follow at residues 1685-1710 (QTKL…SKVL) and 1760-1865 (TLPK…GPEL). Serine 1697 carries the post-translational modification Phosphoserine. A phosphothreonine mark is found at threonine 1699, threonine 1790, and threonine 1792. The Nuclear localization signal motif lies at 1812 to 1819 (RFKRRHRS). Positions 1850 to 1859 (DTKPSVPTTS) are enriched in polar residues. Residues 1856–1892 (PTTSEGGPELELQIPELPLDSNEFWVHEGCILWANGI) form a C2HC pre-PHD-type; degenerate zinc finger. The PHD-type zinc finger occupies 1912-1960 (MKCSHCQEAGATLGCYNKGCSFRYHYPCAIDADCLLHEENFSVRCPKHK). Positions 1966–1987 (PLPPLQNKTAKGSLSTEQSERG) are disordered. Residues 1971-1987 (QNKTAKGSLSTEQSERG) show a composition bias toward polar residues.

Homodimer. Interacts with RNF4 and JUN. Binds to the regulatory region of MMP3. As to expression, expressed in brain, lung, liver, kidney and testes.

It is found in the nucleus. In terms of biological role, transcriptional activator that binds to the regulatory region of MMP3 and thereby controls stromelysin expression. It stimulates the activity of various transcriptional activators such as JUN, SP1, PAX6 and ETS1, suggesting a function as a coactivator. This Mus musculus (Mouse) protein is Transcription factor 20 (Tcf20).